A 362-amino-acid polypeptide reads, in one-letter code: S-adenosylmethionine-dependent nucleotide dehydratase RSAD2 (362 aa).

The tract at residues 47 to 73 is disordered; sequence EQPQVRGEPEDTQETQEDGNSTQPTTP. Residues 64-73 show a composition bias toward polar residues; it reads DGNSTQPTTP. In terms of domain architecture, Radical SAM core spans 70-290; that stretch reads PTTPVSVNYH…LERHKEVSCL (221 aa). [4Fe-4S] cluster is bound by residues C84, C88, and C91. At K198 the chain carries N6-acetyllysine. K207 participates in a covalent cross-link: Glycyl lysine isopeptide (Lys-Gly) (interchain with G-Cter in ubiquitin).

Belongs to the radical SAM superfamily. RSAD2 family. In terms of assembly, homodimer. Interacts with IRAK1 and TRAF6. Interacts with FPPS. Interacts with HADHB. Interacts (via C-terminus) with VAPA/VAP33 (via C-terminus). [4Fe-4S] cluster serves as cofactor. Acetylated by HAT1. HAT1-mediated acetylation of Lys-198 in turn recruits UBE4A that stimulates RSAD2 polyubiquitination leading to proteasomal degradation. Post-translationally, 'Lys-6'-linked polyubiquitination at Lys-207 leads to RSAD2 protein degradation. Expressed at higher levels in atherosclerotic arteries than in normal arteries.

The protein resides in the endoplasmic reticulum membrane. The protein localises to the golgi apparatus. Its subcellular location is the endoplasmic reticulum. It localises to the lipid droplet. It is found in the mitochondrion. The protein resides in the mitochondrion inner membrane. The protein localises to the mitochondrion outer membrane. It catalyses the reaction CTP + AH2 + S-adenosyl-L-methionine = 3'-deoxy-3',4'-didehydro-CTP + 5'-deoxyadenosine + L-methionine + A + H2O + H(+). With respect to regulation, IRAK1 and TRAF6 synergistically activate RSAD2 increasing its activity with CTP as substrate about 10-fold. Its function is as follows. Interferon-inducible antiviral protein which plays a major role in the cell antiviral state induced by type I and type II interferon. Catalyzes the conversion of cytidine triphosphate (CTP) to 3'-deoxy-3',4'-didehydro-CTP (ddhCTP) via a SAM-dependent radical mechanism. In turn, ddhCTP acts as a chain terminator for the RNA-dependent RNA polymerases from multiple viruses and directly inhibits viral replication. Therefore, inhibits a wide range of DNA and RNA viruses. Also promotes TLR7 and TLR9-dependent production of IFN-beta production in plasmacytoid dendritic cells (pDCs) by facilitating 'Lys-63'-linked ubiquitination of IRAK1 by TRAF6. Plays a role in CD4+ T-cells activation and differentiation. Facilitates T-cell receptor (TCR)-mediated GATA3 activation and optimal T-helper 2 (Th2) cytokine production by modulating NFKB1 and JUNB activities. Can inhibit secretion of soluble proteins. In Mus musculus (Mouse), this protein is S-adenosylmethionine-dependent nucleotide dehydratase RSAD2.